The following is a 299-amino-acid chain: Putative zinc-binding protein ORF12 (299 aa).

In Ictaluridae (bullhead catfishes), this protein is Putative zinc-binding protein ORF12 (ORF12).